A 324-amino-acid polypeptide reads, in one-letter code: Acetyl-coenzyme A carboxylase carboxyl transferase subunit alpha (324 aa).

Residues Ile-37 to Gln-291 form the CoA carboxyltransferase C-terminal domain.

It belongs to the AccA family. Acetyl-CoA carboxylase is a heterohexamer composed of biotin carboxyl carrier protein (AccB), biotin carboxylase (AccC) and two subunits each of ACCase subunit alpha (AccA) and ACCase subunit beta (AccD).

The protein resides in the cytoplasm. It catalyses the reaction N(6)-carboxybiotinyl-L-lysyl-[protein] + acetyl-CoA = N(6)-biotinyl-L-lysyl-[protein] + malonyl-CoA. Its pathway is lipid metabolism; malonyl-CoA biosynthesis; malonyl-CoA from acetyl-CoA: step 1/1. In terms of biological role, component of the acetyl coenzyme A carboxylase (ACC) complex. First, biotin carboxylase catalyzes the carboxylation of biotin on its carrier protein (BCCP) and then the CO(2) group is transferred by the carboxyltransferase to acetyl-CoA to form malonyl-CoA. The chain is Acetyl-coenzyme A carboxylase carboxyl transferase subunit alpha from Bacillus cytotoxicus (strain DSM 22905 / CIP 110041 / 391-98 / NVH 391-98).